The sequence spans 220 residues: GTP-binding protein YPT53 (220 aa).

GTP contacts are provided by residues 19 to 26 (GESAVGKS), 67 to 71 (DTAGQ), and 125 to 128 (NKMD). 2 S-geranylgeranyl cysteine lipidation sites follow: Cys218 and Cys220. Cys220 is subject to Cysteine methyl ester.

The protein belongs to the small GTPase superfamily. Rab family.

The protein resides in the cell membrane. Its function is as follows. Required for transport in the endocytic pathway and for correct sorting of the vacuolar hydrolases suggesting a possible intersection of the endocytic with the vacuolar sorting pathway. May be involved in recruiting the MON1-CCZ1 complex to membranes enriched in phosphatidylinositol 3-phosphate (PtdIns[3]P) or other charged lipids, leading to recruitment of YPT7. This Saccharomyces cerevisiae (strain ATCC 204508 / S288c) (Baker's yeast) protein is GTP-binding protein YPT53 (YPT53).